The following is a 219-amino-acid chain: Claudin-3 (219 aa).

At 1-8 the chain is on the cytoplasmic side; that stretch reads MSMGLEIT. A helical membrane pass occupies residues 9-29; that stretch reads GTSLAVLGWLCTIVCCALPMW. The Extracellular portion of the chain corresponds to 30–80; the sequence is RVSAFIGSSIITAQITWEGLWMNCVVQSTGQMQCKMYDSLLALPQDLQAAR. A helical transmembrane segment spans residues 81-101; the sequence is ALIVVSILLAAFGLLVALVGA. Topologically, residues 102-115 are cytoplasmic; it reads QCTNCVQDETAKAK. A helical transmembrane segment spans residues 116–136; the sequence is ITIVAGVLFLLAALLTLVPVS. At 137–159 the chain is on the extracellular side; that stretch reads WSANTIIRDFYNPLVPEAQKREM. Residues 160 to 180 traverse the membrane as a helical segment; sequence GAGLYVGWAAAALQLLGGALL. Topologically, residues 181–219 are cytoplasmic; it reads CCSCPPRDKYAPTKILYSAPRSTGPGTGTGTAYDRKDYV. Tyrosine 197 bears the Phosphotyrosine mark. The residue at position 198 (serine 198) is a Phosphoserine. Residues 218–219 form an interactions with TJP1, TJP2 and TJP3 region; that stretch reads YV.

It belongs to the claudin family. As to quaternary structure, can form homo- and heteropolymers with other CLDN. Homopolymers interact with CLDN1 and CLDN2 homopolymers. Interacts in cis (within the same plasma membrane) with CLDN19. Directly interacts with TJP1/ZO-1, TJP2/ZO-2 and TJP3/ZO-3. In terms of assembly, (Microbial infection) Interacts with Clostridium perfringens enterotoxin CPE; the interaction may disrupt claudin assembly in tight junctions. In terms of tissue distribution, expressed in the lung. Expressed at high levels in the liver and at lower levels, in kidney and testis.

It is found in the cell junction. The protein localises to the tight junction. It localises to the cell membrane. Plays a major role in tight junction-specific obliteration of the intercellular space, through calcium-independent cell-adhesion activity. The protein is Claudin-3 (Cldn3) of Mus musculus (Mouse).